The following is a 201-amino-acid chain: Small ribosomal subunit protein uS4c (201 aa).

Residues 1–14 (MSRYRGPRFKKIRR) are compositionally biased toward basic residues. The disordered stretch occupies residues 1-44 (MSRYRGPRFKKIRRLGALPGLTSKRPRAGSDPRNQSRSGKKSQY). In terms of domain architecture, S4 RNA-binding spans 89–152 (MRLDNTLFRL…NSRTLVQNLL (64 aa)).

This sequence belongs to the universal ribosomal protein uS4 family. As to quaternary structure, part of the 30S ribosomal subunit. Contacts protein S5. The interaction surface between S4 and S5 is involved in control of translational fidelity.

The protein resides in the plastid. Its subcellular location is the chloroplast. One of the primary rRNA binding proteins, it binds directly to 16S rRNA where it nucleates assembly of the body of the 30S subunit. In terms of biological role, with S5 and S12 plays an important role in translational accuracy. This chain is Small ribosomal subunit protein uS4c (rps4), found in Draba nemorosa (Woodland whitlowgrass).